The sequence spans 555 residues: Sulfite reductase [ferredoxin] (555 aa).

Residues 1–22 (MTTARPAKARNEGQWALGHREP) are disordered. Residues 69–161 (YTQREQGYDG…DVGLQTTEAC (93 aa)) constitute a cross-link (3'-(S-cysteinyl)-tyrosine (Tyr-Cys)). [4Fe-4S] cluster-binding residues include cysteine 417, cysteine 423, cysteine 463, and cysteine 467. Cysteine 467 lines the siroheme pocket.

This sequence belongs to the nitrite and sulfite reductase 4Fe-4S domain family. In terms of assembly, monomer. Requires siroheme as cofactor. The cofactor is [4Fe-4S] cluster.

The enzyme catalyses hydrogen sulfide + 6 oxidized [2Fe-2S]-[ferredoxin] + 3 H2O = sulfite + 6 reduced [2Fe-2S]-[ferredoxin] + 7 H(+). Its function is as follows. Catalyzes the reduction of sulfite to sulfide, a step in the biosynthesis of sulfur-containing amino acids and cofactors. This Mycobacterium bovis (strain ATCC BAA-935 / AF2122/97) protein is Sulfite reductase [ferredoxin] (sir).